The sequence spans 148 residues: Small ribosomal subunit protein eS6 (148 aa).

The protein belongs to the eukaryotic ribosomal protein eS6 family.

The protein is Small ribosomal subunit protein eS6 of Pyrobaculum neutrophilum (strain DSM 2338 / JCM 9278 / NBRC 100436 / V24Sta) (Thermoproteus neutrophilus).